We begin with the raw amino-acid sequence, 444 residues long: METILQNVPVGQKVGIAFSGGLDTSAALRWMKNKGALPYAYTANLGQPDEADYDEIPRKAMEYGAEQARLIDCRSQLAGEGIAAIQAGAFHISTGGITYFNTTPLGRAVTGTMLVAAMKEDDVNIWGDGSTFKGNDIERFYRYGLLTNPALKIYKPWLDQTFIDELGGRAEMSAFMTKEGFGYKMSAEKAYSTDSNMLGATHEAKDLEFLNSGIRIVNPIMGVAFWKPEVEVKAEEVSVTFDEGRPVAINGKEIADPVELFLEANRIGGRHGLGMSDQIENRIIEAKSRGIYEAPGMALLHIAYERLVTGIHNEDTIEQYRINGLRLGRLLYQGRWFDPQAIMLRETAQRWVARAVTGTVTLELRRGNDYSILNTESPNLTYAPERLSMEKVEDAPFSPADRIGQLTMRNLDLMDTRDKLAIYAKAGLLSLGTSTALPQLGGKE.

ATP contacts are provided by residues 17–25 (AFSGGLDTS) and A43. Y99 contributes to the L-citrulline binding site. 2 residues coordinate ATP: G129 and T131. The L-aspartate site is built by T131, N135, and D136. N135 contacts L-citrulline. Residue D136 participates in ATP binding. L-citrulline-binding residues include R139 and S192. Position 194 (D194) interacts with ATP. Residues T201, E203, and E280 each coordinate L-citrulline.

This sequence belongs to the argininosuccinate synthase family. Type 2 subfamily. Homotetramer.

It localises to the cytoplasm. The catalysed reaction is L-citrulline + L-aspartate + ATP = 2-(N(omega)-L-arginino)succinate + AMP + diphosphate + H(+). It participates in amino-acid biosynthesis; L-arginine biosynthesis; L-arginine from L-ornithine and carbamoyl phosphate: step 2/3. In Delftia acidovorans (strain DSM 14801 / SPH-1), this protein is Argininosuccinate synthase.